Consider the following 123-residue polypeptide: Dihydroneopterin triphosphate 2'-epimerase (123 aa).

Belongs to the DHNA family. Homooctamer. Dimer of tetramers.

It catalyses the reaction 7,8-dihydroneopterin 3'-triphosphate = 7,8-dihydromonapterin 3'-triphosphate. In terms of biological role, catalyzes the epimerization of carbon 2' of the side chain of 7,8-dihydroneopterin triphosphate (H2NTP) to form 7,8-dihydromonapterin triphosphate (H2MTP). Is required for tetrahydromonapterin biosynthesis. The protein is Dihydroneopterin triphosphate 2'-epimerase of Pseudomonas aeruginosa (strain ATCC 15692 / DSM 22644 / CIP 104116 / JCM 14847 / LMG 12228 / 1C / PRS 101 / PAO1).